We begin with the raw amino-acid sequence, 715 residues long: Methylmalonyl-CoA mutase large subunit (715 aa).

Tyr-70, Met-73, Arg-77, Thr-80, Arg-82, Tyr-84, and Ser-109 together coordinate (R)-methylmalonyl-CoA. Cob(II)alamin contacts are provided by Phe-112 and Ala-134. (R)-methylmalonyl-CoA-binding residues include Thr-190 and Gln-192. Residues Val-201 and Arg-202 each contribute to the cob(II)alamin site. The (R)-methylmalonyl-CoA site is built by Arg-202, His-239, Arg-278, and Ser-280. Cob(II)alamin contacts are provided by Gly-328, Glu-365, Ala-368, Gly-599, His-600, Asp-601, Arg-602, Ser-645, Leu-647, Gly-676, and Thr-699. Residues 587-715 form the B12-binding domain; that stretch reads QPRIMIAKMG…AKVLEILLEE (129 aa).

This sequence belongs to the methylmalonyl-CoA mutase family. Heterodimer of an alpha and a beta chain. Adenosylcob(III)alamin serves as cofactor.

The catalysed reaction is (R)-methylmalonyl-CoA = succinyl-CoA. Functionally, catalyzes the isomerization of succinyl-CoA to methylmalonyl-CoA during synthesis of propionate from tricarboxylic acid-cycle intermediates. This Porphyromonas gingivalis (strain ATCC BAA-308 / W83) protein is Methylmalonyl-CoA mutase large subunit (mutB).